Reading from the N-terminus, the 165-residue chain is 5-formyltetrahydrofolate cyclo-ligase (165 aa).

4 to 8 serves as a coordination point for ATP; that stretch reads KNSLR. Positions 51 and 56 each coordinate substrate. 116 to 124 contacts ATP; it reads RIGFGKGYY. D125 serves as a coordination point for Mg(2+). R126 and W154 together coordinate ATP. A Mg(2+)-binding site is contributed by D155.

Belongs to the 5-formyltetrahydrofolate cyclo-ligase family. In terms of assembly, monomer or homodimer. The cofactor is Mg(2+).

It is found in the cytoplasm. It carries out the reaction (6S)-5-formyl-5,6,7,8-tetrahydrofolate + ATP = (6R)-5,10-methenyltetrahydrofolate + ADP + phosphate. Its function is as follows. Involved in folate metabolism. Catalyzes the irreversible conversion of 5-formyltetrahydrofolate (5-FTHF) to yield 5,10-methenyltetrahydrofolate. In Mycoplasma genitalium (strain ATCC 33530 / DSM 19775 / NCTC 10195 / G37) (Mycoplasmoides genitalium), this protein is 5-formyltetrahydrofolate cyclo-ligase.